Here is a 188-residue protein sequence, read N- to C-terminus: Calcium load-activated calcium channel (188 aa).

Over 1-4 the chain is Lumenal; that stretch reads MSTM. The chain crosses the membrane as a helical span at residues 5-32; that stretch reads FADTLLIVFISVCTALLAEGITWVLVYR. A coiled-coil region spans residues 32–89; sequence RTDKYKRLKAEVEKQSKKLEKKKETITESAGRQQKKKIERQEEKLKNNNRDLSMVRMK. Residues 33–86 are Cytoplasmic-facing; it reads TDKYKRLKAEVEKQSKKLEKKKETITESAGRQQKKKIERQEEKLKNNNRDLSMV. Ser-60 carries the phosphoserine modification. The chain crosses the membrane as a helical span at residues 87 to 106; that stretch reads RMKSMFAIGFCFTALMGMFN. Residues 107 to 120 are Lumenal-facing; it reads SIFDGRVVAKLPFT. An intramembrane segment occupies 121–130; sequence PLSYIQGLSH. Residues 131-140 lie on the Lumenal side of the membrane; sequence RNLLGDDTTD. Residues 141–162 traverse the membrane as a helical segment; that stretch reads CSFIFLYILCTMSIRQNIQKIL. Residues 163 to 188 are Cytoplasmic-facing; sequence GLAPSRAATKQAGGFLGPPPPSGKFS. Ser-188 is modified (phosphoserine).

This sequence belongs to the TMCO1 family. In terms of assembly, homodimer and homotetramer. Homodimer under resting conditions; forms homotetramers following ER calcium overload. Component of the GET- and EMC-like (GEL) complex, composed of RAB5IF/OPTI and TMCO1. The GEL complex is part of the multi-pass translocon (MPT) complex, composed of three subcomplexes, the GEL complex (composed of RAB5IF/OPTI and TMCO1), the BOS complex (composed of NCLN/Nicalin, NOMO1 and TMEM147) and the PAT complex (composed of WDR83OS/Asterix and CCDC47). The MPT complex associates with the SEC61 complex.

Its subcellular location is the endoplasmic reticulum membrane. It is found in the golgi apparatus membrane. The protein localises to the mitochondrion membrane. The enzyme catalyses Ca(2+)(in) = Ca(2+)(out). Its function is as follows. Endoplasmic reticulum (ER) calcium-selective channel preventing intracellular Ca2(+) stores from overfilling and maintaining calcium homeostasis in the ER. In response to endoplasmic reticulum (ER) Ca2(+) overloading, assembles into a homotetramer, forming a functional calcium-selective channel facilitating Ca2(+) release. Mediates ER Ca2(+) homeostasis in osteoblasts and plays a key role in bone formation, via the CaMKII-HDAC4-RUNX2 signaling axis. Component of the multi-pass translocon (MPT) complex that mediates insertion of multi-pass membrane proteins into the lipid bilayer of membranes. The MPT complex takes over after the SEC61 complex: following membrane insertion of the first few transmembrane segments of proteins by the SEC61 complex, the MPT complex occludes the lateral gate of the SEC61 complex to promote insertion of subsequent transmembrane regions. Within the MPT complex, the GEL subcomplex may mediate insertion of transmembrane regions into the membrane. This chain is Calcium load-activated calcium channel, found in Bos taurus (Bovine).